A 317-amino-acid polypeptide reads, in one-letter code: tRNA dimethylallyltransferase (317 aa).

An ATP-binding site is contributed by 14 to 21; the sequence is GPTASGKS. Substrate is bound at residue 16-21; sequence TASGKS. Interaction with substrate tRNA stretches follow at residues 39–42 and 163–167; these read DSVL and QRIQR.

Belongs to the IPP transferase family. As to quaternary structure, monomer. It depends on Mg(2+) as a cofactor.

The enzyme catalyses adenosine(37) in tRNA + dimethylallyl diphosphate = N(6)-dimethylallyladenosine(37) in tRNA + diphosphate. Its function is as follows. Catalyzes the transfer of a dimethylallyl group onto the adenine at position 37 in tRNAs that read codons beginning with uridine, leading to the formation of N6-(dimethylallyl)adenosine (i(6)A). This chain is tRNA dimethylallyltransferase, found in Xylella fastidiosa (strain M23).